The following is a 469-amino-acid chain: Gamma-aminobutyric acid permease (469 aa).

Topologically, residues 1 to 17 (MNQSQSGLKKELKTRHM) are cytoplasmic. Residues 18-38 (TMISIAGVIGAGLFVGSGSVI) form a helical membrane-spanning segment. A topological domain (extracellular) is located at residue H39. The helical transmembrane segment at 40–60 (STGPGAVVSYALAGLLVIFIM) threads the bilayer. Residues 61–94 (RMLGEMSAVNPTSGSFSQYAHDAIGPWAGFTIGW) lie on the Cytoplasmic side of the membrane. Residues 95-115 (LYWFFWVIVIAIEAIAGAGII) traverse the membrane as a helical segment. A topological domain (extracellular) is located at residue Q116. The helical transmembrane segment at 117 to 137 (YWFHDIPLWLTSLILTIVLTL) threads the bilayer. The Cytoplasmic segment spans residues 138 to 157 (TNVYSVKSFGEFEYWFSLIK). The helical transmembrane segment at 158-178 (VVTIIAFLIVGFAFIFGFAPG) threads the bilayer. Residues 179-200 (SEPVGFSNLTGKGGFFPEGISS) lie on the Extracellular side of the membrane. A helical transmembrane segment spans residues 201-221 (VLLGIVVVIFSFMGTEIVAIA). The Cytoplasmic portion of the chain corresponds to 222 to 242 (AGETSNPIESVTKATRSVVWR). The helical transmembrane segment at 243-263 (IIVFYVGSIAIVVALLPWNSA) threads the bilayer. The Extracellular segment spans residues 264-269 (NILESP). The chain crosses the membrane as a helical span at residues 270–290 (FVAVLEHIGVPAAAQIMNFIV). The Cytoplasmic segment spans residues 291 to 328 (LTAVLSCLNSGLYTTSRMLYSLAERNEAPRRFMKLSKK). The helical transmembrane segment at 329–349 (GVPVQAIVAGTFFSYIAVVMN) threads the bilayer. At 350-355 (YFSPDT) the chain is on the extracellular side. The helical transmembrane segment at 356–376 (VFLFLVNSSGAIALLVYLVIA) threads the bilayer. Over 377–401 (VSQLKMRKKLEKTNPEALKIKMWLF) the chain is Cytoplasmic. The chain crosses the membrane as a helical span at residues 402–422 (PFLTYLTIIAICGILVSMAFI). Over 423–425 (DSM) the chain is Extracellular. A helical transmembrane segment spans residues 426-446 (RDELLLTGVITGIVLISYLVF). Residues 447 to 469 (RKRKVSEKAAANPVTQQQPDILP) lie on the Cytoplasmic side of the membrane.

It belongs to the amino acid-polyamine-organocation (APC) superfamily. Amino acid transporter (AAT) (TC 2.A.3.1) family.

It localises to the cell membrane. It catalyses the reaction 4-aminobutanoate(in) + H(+)(in) = 4-aminobutanoate(out) + H(+)(out). The catalysed reaction is beta-alanine(in) + H(+)(in) = beta-alanine(out) + H(+)(out). Its pathway is amino-acid degradation; 4-aminobutanoate degradation. In terms of biological role, transporter for gamma-aminobutyrate (GABA). Can also transport beta-alanine. Can translocate several open-chain GABA analogs (3-aminobutyrate, 3-aminopropanoate, cis-4-aminobutenoate) across the membrane via counterflow against GABA, but cannot transport muscimol. Also functions as a low-affinity proline importer. The sequence is that of Gamma-aminobutyric acid permease from Bacillus subtilis (strain 168).